Consider the following 167-residue polypeptide: Peptide deformylase (167 aa).

Fe cation contacts are provided by cysteine 91 and histidine 133. Glutamate 134 is an active-site residue. Histidine 137 is a Fe cation binding site.

This sequence belongs to the polypeptide deformylase family. Fe(2+) serves as cofactor.

The enzyme catalyses N-terminal N-formyl-L-methionyl-[peptide] + H2O = N-terminal L-methionyl-[peptide] + formate. Its function is as follows. Removes the formyl group from the N-terminal Met of newly synthesized proteins. Requires at least a dipeptide for an efficient rate of reaction. N-terminal L-methionine is a prerequisite for activity but the enzyme has broad specificity at other positions. The chain is Peptide deformylase from Neisseria gonorrhoeae (strain ATCC 700825 / FA 1090).